The chain runs to 620 residues: UDP-glucose:protein N-beta-glucosyltransferase (620 aa).

This sequence belongs to the glycosyltransferase 41 family. Requires Does not require a metal cofactor. as cofactor.

It localises to the cytoplasm. The catalysed reaction is L-asparaginyl-[protein] + UDP-alpha-D-glucose = N(4)-(beta-D-glucosyl)-L-asparaginyl-[protein] + UDP + H(+). It participates in protein modification; protein glycosylation. Its function is as follows. Inverting glycosyltransferase that catalyzes the transfer of one glucose moiety from UDP-glucose to an asparagine residue in peptides and proteins containing the NX(S/T) motif, resulting in their modification with a beta-linked 1,N-glucose. Likely acts as a key component of a general protein glycosylation system. Also accepts UDP-galactose as a substrate donor, albeit with low efficiency. Cannot use UDP-GlcNAc or UDP-GalNAc as substrate donor. The sequence is that of UDP-glucose:protein N-beta-glucosyltransferase from Actinobacillus pleuropneumoniae serotype 7 (strain AP76).